Here is a 342-residue protein sequence, read N- to C-terminus: Growth hormone-regulated TBC protein 1 (342 aa).

The 192-residue stretch at 72–263 (GIPNEHRSHV…RIWDCLFFEG (192 aa)) folds into the Rab-GAP TBC domain.

In terms of biological role, may act as a GTPase-activating protein for Rab family protein(s). In Xenopus tropicalis (Western clawed frog), this protein is Growth hormone-regulated TBC protein 1 (grtp1).